Consider the following 1648-residue polypeptide: Homeostatic regulator of DAG (1648 aa).

The DMAP1-binding domain maps to 5-101; sequence IPPTLPLDLQ…YRVTTINSTS (97 aa). N-linked (GlcNAc...) asparagine glycosylation is found at Asn-28, Asn-71, and Asn-98. Disordered stretches follow at residues 52–73 and 96–130; these read PYTPLRSPNSRKSKHLHRRNTS and TINSTSANNTPRRRSKRYTASLQSSLPGSSDENGS. Over residues 60 to 71 the composition is skewed to basic residues; that stretch reads NSRKSKHLHRRN. Composition is skewed to polar residues over residues 96–105 and 113–128; these read TINSTSANNT and YTASLQSSLPGSSDEN. Ser-99 carries the post-translational modification Phosphoserine. Asn-128, Asn-151, and Asn-209 each carry an N-linked (GlcNAc...) asparagine glycan. Residues 158-893 are fatty acyl-AMP ligase-like domain 1; that stretch reads AMTDSLPLIL…VEKKFLNNDL (736 aa). A helical membrane pass occupies residues 228–248; that stretch reads VIEFTIALLGCFISGMAAVPV. 5 N-linked (GlcNAc...) asparagine glycosylation sites follow: Asn-288, Asn-328, Asn-575, Asn-644, and Asn-730. The residue at position 751 (Ser-751) is a Phosphoserine. Asn-881, Asn-917, Asn-995, and Asn-1009 each carry an N-linked (GlcNAc...) asparagine glycan. The segment at 950–1648 is fatty acyl-AMP ligase-like domain 2; the sequence is VKPKLALQCS…LLSDYEKDNI (699 aa). A helical transmembrane segment spans residues 1061–1081; the sequence is YVAMIMACLYCNLLVIPLPSV. N-linked (GlcNAc...) asparagine glycosylation occurs at Asn-1198. The chain crosses the membrane as a helical span at residues 1224–1244; it reads GLGFMFSCLLGIYTGASTCLF. Asn-1301, Asn-1302, Asn-1447, Asn-1472, Asn-1488, Asn-1565, Asn-1597, and Asn-1634 each carry an N-linked (GlcNAc...) asparagine glycan.

It localises to the vacuole membrane. The protein resides in the mitochondrion membrane. Functionally, homeostatic regulator of a chemically distinct subset of diacylglycerols (DAGs) with C36 chain length that prevents the toxic accumulation of these specific DAGs in the logarithmic growth phase, which otherwise leads to endoplasmic reticulum stress. Maintains the basal level of DAG subspecies by directly facilitating DAG to triacylglycerol (TAG) conversion process, possibly via adenylation activity of its FLD domains. Does not affect the abundant DAG species (representing over 90% of total DAG pool), comprised of C32 and C34 chain lengths. Required for vacuole fusion-mediated osmoadaptation. In Saccharomyces cerevisiae (strain ATCC 204508 / S288c) (Baker's yeast), this protein is Homeostatic regulator of DAG.